The sequence spans 130 residues: Small ribosomal subunit protein uS9 (130 aa).

This sequence belongs to the universal ribosomal protein uS9 family.

The sequence is that of Small ribosomal subunit protein uS9 from Pectobacterium carotovorum subsp. carotovorum (strain PC1).